The chain runs to 60 residues: Large ribosomal subunit protein bL32 (60 aa).

The segment covering 1–16 (MPNPKRRHSKKRTSTR) has biased composition (basic residues). The tract at residues 1-28 (MPNPKRRHSKKRTSTRRAHDALKQPGLS) is disordered.

The protein belongs to the bacterial ribosomal protein bL32 family.

The polypeptide is Large ribosomal subunit protein bL32 (Solibacter usitatus (strain Ellin6076)).